We begin with the raw amino-acid sequence, 187 residues long: Crossover junction endodeoxyribonuclease RuvC (187 aa).

Catalysis depends on residues aspartate 7, glutamate 67, and aspartate 140. Residues aspartate 7, glutamate 67, and aspartate 140 each coordinate Mg(2+).

This sequence belongs to the RuvC family. In terms of assembly, homodimer which binds Holliday junction (HJ) DNA. The HJ becomes 2-fold symmetrical on binding to RuvC with unstacked arms; it has a different conformation from HJ DNA in complex with RuvA. In the full resolvosome a probable DNA-RuvA(4)-RuvB(12)-RuvC(2) complex forms which resolves the HJ. Mg(2+) is required as a cofactor.

The protein resides in the cytoplasm. The catalysed reaction is Endonucleolytic cleavage at a junction such as a reciprocal single-stranded crossover between two homologous DNA duplexes (Holliday junction).. Its function is as follows. The RuvA-RuvB-RuvC complex processes Holliday junction (HJ) DNA during genetic recombination and DNA repair. Endonuclease that resolves HJ intermediates. Cleaves cruciform DNA by making single-stranded nicks across the HJ at symmetrical positions within the homologous arms, yielding a 5'-phosphate and a 3'-hydroxyl group; requires a central core of homology in the junction. The consensus cleavage sequence is 5'-(A/T)TT(C/G)-3'. Cleavage occurs on the 3'-side of the TT dinucleotide at the point of strand exchange. HJ branch migration catalyzed by RuvA-RuvB allows RuvC to scan DNA until it finds its consensus sequence, where it cleaves and resolves the cruciform DNA. The protein is Crossover junction endodeoxyribonuclease RuvC of Prosthecochloris aestuarii (strain DSM 271 / SK 413).